The sequence spans 227 residues: Cytidylate kinase (227 aa).

Position 12 to 20 (12 to 20) interacts with ATP; the sequence is GPSGAGKGT.

Belongs to the cytidylate kinase family. Type 1 subfamily.

The protein localises to the cytoplasm. The catalysed reaction is CMP + ATP = CDP + ADP. The enzyme catalyses dCMP + ATP = dCDP + ADP. This is Cytidylate kinase from Salmonella arizonae (strain ATCC BAA-731 / CDC346-86 / RSK2980).